The chain runs to 241 residues: tRNA (guanine-N(7)-)-methyltransferase B (241 aa).

Residues Gly-61, Glu-84, Arg-86, Asn-117, Ala-118, and Leu-137 each coordinate S-adenosyl-L-methionine. The active site involves Asp-140. Residues 141-149 are alphaC helix; that stretch reads PHFKKTKHK. S-adenosyl-L-methionine is bound by residues Thr-215 and Glu-217. Positions 215-223 are alpha6 helix; that stretch reads TEEGKKVQR.

It belongs to the class I-like SAM-binding methyltransferase superfamily. TrmB family. Catalytic component of the METTL1-WDR4 complex, composed of mettl1 and wdr4.

It localises to the nucleus. It carries out the reaction guanosine(46) in tRNA + S-adenosyl-L-methionine = N(7)-methylguanosine(46) in tRNA + S-adenosyl-L-homocysteine. The catalysed reaction is a guanosine in mRNA + S-adenosyl-L-methionine = an N(7)-methylguanosine in mRNA + S-adenosyl-L-homocysteine. It catalyses the reaction a guanosine in miRNA + S-adenosyl-L-methionine = an N(7)-methylguanosine in miRNA + S-adenosyl-L-homocysteine. The protein operates within tRNA modification; N(7)-methylguanine-tRNA biosynthesis. Functionally, catalytic component of METTL1-WDR4 methyltransferase complex that mediates the formation of N(7)-methylguanine in a subset of RNA species, such as tRNAs, mRNAs and microRNAs (miRNAs). Catalyzes the formation of N(7)-methylguanine at position 46 (m7G46) in a large subset of tRNAs that contain the 5'-RAGGU-3' motif within the variable loop. M7G46 interacts with C13-G22 in the D-loop to stabilize tRNA tertiary structure and protect tRNAs from decay. Also acts as a methyltransferase for a subset of internal N(7)-methylguanine in mRNAs. Internal N(7)-methylguanine methylation of mRNAs in response to stress promotes their relocalization to stress granules, thereby suppressing their translation. Also methylates a specific subset of miRNAs. In Xenopus tropicalis (Western clawed frog), this protein is tRNA (guanine-N(7)-)-methyltransferase B (mettl1-B).